The sequence spans 525 residues: GMP synthase [glutamine-hydrolyzing] (525 aa).

The Glutamine amidotransferase type-1 domain occupies 9-207; sequence RILILDFGSQ…VLDICQCEAL (199 aa). The Nucleophile role is filled by C86. Active-site residues include H181 and E183. Residues 208 to 400 form the GMPS ATP-PPase domain; that stretch reads WTPATIIEDA…LGLPYDMLFR (193 aa). Position 235–241 (235–241) interacts with ATP; sequence SGGVDSS.

In terms of assembly, homodimer.

The catalysed reaction is XMP + L-glutamine + ATP + H2O = GMP + L-glutamate + AMP + diphosphate + 2 H(+). Its pathway is purine metabolism; GMP biosynthesis; GMP from XMP (L-Gln route): step 1/1. Its function is as follows. Catalyzes the synthesis of GMP from XMP. The polypeptide is GMP synthase [glutamine-hydrolyzing] (Serratia proteamaculans (strain 568)).